A 146-amino-acid polypeptide reads, in one-letter code: Large ribosomal subunit protein uL15 (146 aa).

The disordered stretch occupies residues 1–55 (MGLRLNELSPGVGAKKTAQRRGRGIGSGLGKTGGRGVKGQKSRSGSSIRSGFEGG). The span at 24–37 (GIGSGLGKTGGRGV) shows a compositional bias: gly residues.

The protein belongs to the universal ribosomal protein uL15 family. In terms of assembly, part of the 50S ribosomal subunit.

Binds to the 23S rRNA. This is Large ribosomal subunit protein uL15 from Psychrobacter cryohalolentis (strain ATCC BAA-1226 / DSM 17306 / VKM B-2378 / K5).